A 277-amino-acid polypeptide reads, in one-letter code: Hydroxyethylthiazole kinase (277 aa).

Met-55 contributes to the substrate binding site. Residues Arg-130 and Ser-176 each contribute to the ATP site. Residue Gly-203 participates in substrate binding.

It belongs to the Thz kinase family. The cofactor is Mg(2+).

It catalyses the reaction 5-(2-hydroxyethyl)-4-methylthiazole + ATP = 4-methyl-5-(2-phosphooxyethyl)-thiazole + ADP + H(+). Its pathway is cofactor biosynthesis; thiamine diphosphate biosynthesis; 4-methyl-5-(2-phosphoethyl)-thiazole from 5-(2-hydroxyethyl)-4-methylthiazole: step 1/1. Its function is as follows. Catalyzes the phosphorylation of the hydroxyl group of 4-methyl-5-beta-hydroxyethylthiazole (THZ). The sequence is that of Hydroxyethylthiazole kinase from Cutibacterium acnes (strain DSM 16379 / KPA171202) (Propionibacterium acnes).